The sequence spans 264 residues: Myozenin-2 (264 aa).

Omega-N-methylarginine is present on Arg-53. The disordered stretch occupies residues 90–135 (GKVDGSNLEGGSQQAPLTPPNTPDPRSPPNPDNIAPGYSGPLKEIP). Phosphoserine is present on Ser-101. The segment covering 106–120 (LTPPNTPDPRSPPNP) has biased composition (pro residues). Residues Thr-107 and Thr-111 each carry the phosphothreonine modification. Ser-116 carries the post-translational modification Phosphoserine.

Belongs to the myozenin family. In terms of assembly, interacts via its C-terminus with spectrin repeats 3 and 4 of ACTN2. Interacts with ACTN1, LDB3, MYOT and PPP3CA.

It is found in the cytoplasm. The protein resides in the myofibril. It localises to the sarcomere. The protein localises to the z line. Myozenins may serve as intracellular binding proteins involved in linking Z line proteins such as alpha-actinin, gamma-filamin, TCAP/telethonin, LDB3/ZASP and localizing calcineurin signaling to the sarcomere. Plays an important role in the modulation of calcineurin signaling. May play a role in myofibrillogenesis. This chain is Myozenin-2 (MYOZ2), found in Pongo abelii (Sumatran orangutan).